We begin with the raw amino-acid sequence, 839 residues long: Amyloid-beta A4 precursor protein-binding family A member 1 (839 aa).

Disordered stretches follow at residues 1-118 (MNHL…DESA), 235-346 (RLHH…EKRD), and 362-437 (VKTR…ESRK). A compositionally biased stretch (acidic residues) spans 23 to 38 (ESVEADLEHPEVEEEQ). The residue at position 79 (S79) is a Phosphoserine. Composition is skewed to basic and acidic residues over residues 103-112 (DGYEAERAQD) and 237-255 (HHYD…KEAE). Positions 227–315 (YRQEALGARL…TPGGGHPDSP (89 aa)) are munc-18-1 binding. S243, S247, S249, S264, S281, and S286 each carry phosphoserine. T306 is modified (phosphothreonine). Phosphoserine occurs at positions 314 and 369. T372 carries the post-translational modification Phosphothreonine. An LIN-2/CASK binding region spans residues 375–438 (EPKEPIWVMR…ASTNKESRKS (64 aa)). Basic and acidic residues predominate over residues 389–400 (PTRDCDDQRPVD). Residues 401–417 (GDSPSPGSSSPLGAESS) show a composition bias toward low complexity. Residues S403, S405, S410, and S570 each carry the phosphoserine modification. A PID domain is found at 459–645 (DGIIFAANYL…LLNTQDMYND (187 aa)). Positions 628-643 (LSQKEYSDLLNTQDMY) are autoinhibitory helix linker. PDZ domains are found at residues 658 to 744 (DVFI…IVRC) and 749 to 824 (TVLI…TMPA).

As to quaternary structure, part of a multimeric complex containing STXBP1 and STX1A. Interacts with STXBP1. Component of the brain-specific heterotrimeric complex (LIN-10-LIN-2-LIN-7 complex) composed of at least APBA1, CASK, and LIN7, which associates with the motor protein KIF17 to transport vesicles along microtubules. Within the complex, interacts (via PDZ domain) with the motor protein KIF17; the interaction is direct and is required for association of KIF17 with the cargo that is to be transported. Binds to the cytoplasmic domain of amyloid protein (APP). Interacts (via PDZ 1 and 2 domains) with FSPB. Isoform 2 interacts (via its truncated PID domain) with active, GTP-bound RAB6A and RAB6B. As to expression, brain. Detected in the cerebellum, hippocampus, olfactory system, piriform and entorhinal cortex, supraoptic nucleus of the hypothalamus, substantia nigra, and other mesencephalic areas.

Its subcellular location is the cytoplasm. The protein localises to the perinuclear region. The protein resides in the nucleus. It localises to the golgi apparatus. Putative function in synaptic vesicle exocytosis by binding to Munc18-1, an essential component of the synaptic vesicle exocytotic machinery. May modulate processing of the amyloid-beta precursor protein (APP) and hence formation of APP-beta. The polypeptide is Amyloid-beta A4 precursor protein-binding family A member 1 (Apba1) (Rattus norvegicus (Rat)).